The sequence spans 469 residues: Neuraminidase (469 aa).

Residues 1 to 6 (MNPNQK) are Intravirion-facing. A helical transmembrane segment spans residues 7–27 (IITIGSICMVVGIISLILQIG). The tract at residues 11-33 (GSICMVVGIISLILQIGNIVSIW) is involved in apical transport and lipid raft association. The Virion surface portion of the chain corresponds to 28 to 469 (NIVSIWISHS…DAELPLNIDK (442 aa)). Positions 36 to 90 (HSIQTGNQNHTGTCDQSIITYKNSTWVNQTYVNISNTNVVAGKDTTSVILAGNSS) are hypervariable stalk region. Asn44, Asn58, Asn63, Asn68, and Asn88 each carry an N-linked (GlcNAc...) asparagine; by host glycan. A head of neuraminidase region spans residues 91-469 (LCPIRGWAIY…DAELPLNIDK (379 aa)). 8 disulfides stabilise this stretch: Cys92–Cys417, Cys124–Cys129, Cys184–Cys231, Cys233–Cys238, Cys279–Cys292, Cys281–Cys290, Cys318–Cys335, and Cys421–Cys446. Arg118 contributes to the substrate binding site. N-linked (GlcNAc...) asparagine; by host glycosylation occurs at Asn146. The Proton donor/acceptor role is filled by Asp151. Substrate is bound at residue Arg152. Asn235 carries N-linked (GlcNAc...) asparagine; by host glycosylation. Residue 277–278 (EE) coordinates substrate. Arg293 contacts substrate. 3 residues coordinate Ca(2+): Asp294, Gly298, and Asp324. Asn365 is a glycosylation site (N-linked (GlcNAc...) asparagine; by host). Position 368 (Arg368) interacts with substrate. The Nucleophile role is filled by Tyr402.

Belongs to the glycosyl hydrolase 34 family. Homotetramer. Ca(2+) serves as cofactor. N-glycosylated.

The protein resides in the virion membrane. The protein localises to the host apical cell membrane. It catalyses the reaction Hydrolysis of alpha-(2-&gt;3)-, alpha-(2-&gt;6)-, alpha-(2-&gt;8)- glycosidic linkages of terminal sialic acid residues in oligosaccharides, glycoproteins, glycolipids, colominic acid and synthetic substrates.. Its activity is regulated as follows. Inhibited by the neuraminidase inhibitors zanamivir (Relenza) and oseltamivir (Tamiflu). These drugs interfere with the release of progeny virus from infected cells and are effective against all influenza strains. Resistance to neuraminidase inhibitors is quite rare. Functionally, catalyzes the removal of terminal sialic acid residues from viral and cellular glycoconjugates. Cleaves off the terminal sialic acids on the glycosylated HA during virus budding to facilitate virus release. Additionally helps virus spread through the circulation by further removing sialic acids from the cell surface. These cleavages prevent self-aggregation and ensure the efficient spread of the progeny virus from cell to cell. Otherwise, infection would be limited to one round of replication. Described as a receptor-destroying enzyme because it cleaves a terminal sialic acid from the cellular receptors. May facilitate viral invasion of the upper airways by cleaving the sialic acid moieties on the mucin of the airway epithelial cells. Likely to plays a role in the budding process through its association with lipid rafts during intracellular transport. May additionally display a raft-association independent effect on budding. Plays a role in the determination of host range restriction on replication and virulence. Sialidase activity in late endosome/lysosome traffic seems to enhance virus replication. In Influenza A virus (strain A/Fort Monmouth/1/1947 H1N1), this protein is Neuraminidase.